The primary structure comprises 358 residues: Photosystem II protein D1 (358 aa).

3 helical membrane passes run 28–45 (YVGWFGVLMVPTLLAAAI), 117–132 (HFLIGICCWLGRQWEL), and 141–155 (WICVAYSAPLSAAFA). Residue histidine 117 coordinates chlorophyll a. Tryptophan 125 contacts pheophytin a. Residues aspartate 169 and glutamate 188 each contribute to the [CaMn4O5] cluster site. Residues 196–217 (FHMIGVAGMFGGSLFSAMHGSL) form a helical membrane-spanning segment. Histidine 197 provides a ligand contact to chlorophyll a. A quinone is bound by residues histidine 214 and 263 to 264 (SF). Histidine 214 lines the Fe cation pocket. A Fe cation-binding site is contributed by histidine 271. A helical membrane pass occupies residues 273–287 (FLAAWPVICIWITSL). Residues histidine 331, glutamate 332, aspartate 341, and alanine 343 each coordinate [CaMn4O5] cluster. A propeptide spanning residues 344-358 (AAESTPVALIAPAIG) is cleaved from the precursor.

Belongs to the reaction center PufL/M/PsbA/D family. As to quaternary structure, PSII is composed of 1 copy each of membrane proteins PsbA, PsbB, PsbC, PsbD, PsbE, PsbF, PsbH, PsbI, PsbJ, PsbK, PsbL, PsbM, PsbT, PsbX, PsbY, Psb30/Ycf12, peripheral proteins PsbO, CyanoQ (PsbQ), PsbU, PsbV and a large number of cofactors. It forms dimeric complexes. It depends on The D1/D2 heterodimer binds P680, chlorophylls that are the primary electron donor of PSII, and subsequent electron acceptors. It shares a non-heme iron and each subunit binds pheophytin, quinone, additional chlorophylls, carotenoids and lipids. D1 provides most of the ligands for the Mn4-Ca-O5 cluster of the oxygen-evolving complex (OEC). There is also a Cl(-1) ion associated with D1 and D2, which is required for oxygen evolution. The PSII complex binds additional chlorophylls, carotenoids and specific lipids. as a cofactor. Post-translationally, tyr-160 forms a radical intermediate that is referred to as redox-active TyrZ, YZ or Y-Z. In terms of processing, C-terminally processed by CtpA; processing is essential to allow assembly of the oxygen-evolving complex and thus photosynthetic growth.

It is found in the cellular thylakoid membrane. The enzyme catalyses 2 a plastoquinone + 4 hnu + 2 H2O = 2 a plastoquinol + O2. Functionally, photosystem II (PSII) is a light-driven water:plastoquinone oxidoreductase that uses light energy to abstract electrons from H(2)O, generating O(2) and a proton gradient subsequently used for ATP formation. It consists of a core antenna complex that captures photons, and an electron transfer chain that converts photonic excitation into a charge separation. The D1/D2 (PsbA/PsbD) reaction center heterodimer binds P680, the primary electron donor of PSII as well as several subsequent electron acceptors. The polypeptide is Photosystem II protein D1 (Prochlorococcus marinus (strain MIT 9313)).